The primary structure comprises 114 residues: Macrophage migration inhibitory factor homolog (114 aa).

The active-site Proton acceptor; via imino nitrogen is Pro-2. Residues Lys-33 and Ile-65 each coordinate substrate.

It belongs to the MIF family.

The protein localises to the secreted. It catalyses the reaction L-dopachrome = 5,6-dihydroxyindole-2-carboxylate. The catalysed reaction is 3-phenylpyruvate = enol-phenylpyruvate. Functionally, tautomerization of the methyl ester of L-dopachrome. Inhibits migration of human peripheral blood mononuclear cells. The sequence is that of Macrophage migration inhibitory factor homolog from Trichinella spiralis (Trichina worm).